The primary structure comprises 50 residues: Large ribosomal subunit protein bL33 (50 aa).

This sequence belongs to the bacterial ribosomal protein bL33 family.

The polypeptide is Large ribosomal subunit protein bL33 (Endomicrobium trichonymphae).